Reading from the N-terminus, the 311-residue chain is Tricarboxylate transport protein, mitochondrial (311 aa).

Residues Met-1–Ala-13 constitute a propeptide, removed in mature form. Solcar repeat units lie at residues Thr-23–His-111, Arg-122–Trp-208, and Met-218–Leu-303. Helical transmembrane passes span Ile-29–Thr-46, Gly-86–Phe-105, and Leu-129–Met-143. Position 156 is a phosphoserine (Ser-156). A run of 3 helical transmembrane segments spans residues Gly-183–Met-202, Gly-224–Leu-241, and Gly-278–Tyr-297.

It belongs to the mitochondrial carrier (TC 2.A.29) family. Possesses a short cleavable presequence, which, however, is found to be dispensable both for targeting to mitochondria and insertion into the inner membrane. However, the presequence is required to keep SLC25A1 in a soluble state and thus in an import-competent state. Mature SLC25A1 lacking the presequence is prone to aggregation.

The protein resides in the mitochondrion inner membrane. It catalyses the reaction (S)-malate(in) + citrate(out) = (S)-malate(out) + citrate(in). The catalysed reaction is citrate(out) + succinate(in) = citrate(in) + succinate(out). It carries out the reaction D-threo-isocitrate(in) + citrate(out) = D-threo-isocitrate(out) + citrate(in). The enzyme catalyses cis-aconitate(in) + citrate(out) = cis-aconitate(out) + citrate(in). It catalyses the reaction trans-aconitate(in) + citrate(out) = trans-aconitate(out) + citrate(in). The catalysed reaction is phosphoenolpyruvate(in) + citrate(out) = phosphoenolpyruvate(out) + citrate(in). It carries out the reaction maleate(in) + citrate(out) = maleate(out) + citrate(in). In terms of biological role, mitochondrial electroneutral antiporter that exports citrate from the mitochondria into the cytosol in exchange for malate. Also able to mediate the exchange of citrate for isocitrate, phosphoenolpyruvate, cis-aconitate and to a lesser extent trans-aconitate, maleate and succinate. In the cytoplasm, citrate plays important roles in fatty acid and sterol synthesis, regulation of glycolysis, protein acetylation, and other physiopathological processes. The sequence is that of Tricarboxylate transport protein, mitochondrial (Slc25a1) from Rattus norvegicus (Rat).